A 139-amino-acid polypeptide reads, in one-letter code: D-ribose pyranase (139 aa).

His20 acts as the Proton donor in catalysis. Substrate-binding positions include Asp28, His106, and 128–130; that span reads YAN.

This sequence belongs to the RbsD / FucU family. RbsD subfamily. Homodecamer.

It localises to the cytoplasm. It carries out the reaction beta-D-ribopyranose = beta-D-ribofuranose. It functions in the pathway carbohydrate metabolism; D-ribose degradation; D-ribose 5-phosphate from beta-D-ribopyranose: step 1/2. Its function is as follows. Catalyzes the interconversion of beta-pyran and beta-furan forms of D-ribose. This is D-ribose pyranase from Glaesserella parasuis serovar 5 (strain SH0165) (Haemophilus parasuis).